Reading from the N-terminus, the 335-residue chain is Holliday junction branch migration complex subunit RuvB (335 aa).

Residues 1–183 (MDERIISSET…FGVIDHLEFY (183 aa)) are large ATPase domain (RuvB-L). ATP is bound by residues Leu-22, Arg-23, Gly-64, Lys-67, Thr-68, Thr-69, 130-132 (EDY), Arg-173, Tyr-183, and Arg-220. Thr-68 is a binding site for Mg(2+). A small ATPAse domain (RuvB-S) region spans residues 184–254 (TEEQLTEIVL…LAKEALTLLQ (71 aa)). Residues 257-335 (PRGLDTIDQK…HLGISYEKEV (79 aa)) form a head domain (RuvB-H) region. Arg-293, Arg-312, and Arg-317 together coordinate DNA.

The protein belongs to the RuvB family. Homohexamer. Forms an RuvA(8)-RuvB(12)-Holliday junction (HJ) complex. HJ DNA is sandwiched between 2 RuvA tetramers; dsDNA enters through RuvA and exits via RuvB. An RuvB hexamer assembles on each DNA strand where it exits the tetramer. Each RuvB hexamer is contacted by two RuvA subunits (via domain III) on 2 adjacent RuvB subunits; this complex drives branch migration. In the full resolvosome a probable DNA-RuvA(4)-RuvB(12)-RuvC(2) complex forms which resolves the HJ.

Its subcellular location is the cytoplasm. It carries out the reaction ATP + H2O = ADP + phosphate + H(+). Functionally, the RuvA-RuvB-RuvC complex processes Holliday junction (HJ) DNA during genetic recombination and DNA repair, while the RuvA-RuvB complex plays an important role in the rescue of blocked DNA replication forks via replication fork reversal (RFR). RuvA specifically binds to HJ cruciform DNA, conferring on it an open structure. The RuvB hexamer acts as an ATP-dependent pump, pulling dsDNA into and through the RuvAB complex. RuvB forms 2 homohexamers on either side of HJ DNA bound by 1 or 2 RuvA tetramers; 4 subunits per hexamer contact DNA at a time. Coordinated motions by a converter formed by DNA-disengaged RuvB subunits stimulates ATP hydrolysis and nucleotide exchange. Immobilization of the converter enables RuvB to convert the ATP-contained energy into a lever motion, pulling 2 nucleotides of DNA out of the RuvA tetramer per ATP hydrolyzed, thus driving DNA branch migration. The RuvB motors rotate together with the DNA substrate, which together with the progressing nucleotide cycle form the mechanistic basis for DNA recombination by continuous HJ branch migration. Branch migration allows RuvC to scan DNA until it finds its consensus sequence, where it cleaves and resolves cruciform DNA. The chain is Holliday junction branch migration complex subunit RuvB from Listeria monocytogenes serotype 4a (strain HCC23).